The following is a 272-amino-acid chain: 3-methyl-2-oxobutanoate hydroxymethyltransferase (272 aa).

The Mg(2+) site is built by Asp54 and Asp93. 3-methyl-2-oxobutanoate-binding positions include 54–55, Asp93, and Lys123; that span reads DS. Residue Glu125 coordinates Mg(2+). Glu190 (proton acceptor) is an active-site residue.

The protein belongs to the PanB family. Homodecamer; pentamer of dimers. The cofactor is Mg(2+).

It is found in the cytoplasm. The enzyme catalyses 3-methyl-2-oxobutanoate + (6R)-5,10-methylene-5,6,7,8-tetrahydrofolate + H2O = 2-dehydropantoate + (6S)-5,6,7,8-tetrahydrofolate. It functions in the pathway cofactor biosynthesis; (R)-pantothenate biosynthesis; (R)-pantoate from 3-methyl-2-oxobutanoate: step 1/2. Functionally, catalyzes the reversible reaction in which hydroxymethyl group from 5,10-methylenetetrahydrofolate is transferred onto alpha-ketoisovalerate to form ketopantoate. The protein is 3-methyl-2-oxobutanoate hydroxymethyltransferase of Tropheryma whipplei (strain Twist) (Whipple's bacillus).